Reading from the N-terminus, the 392-residue chain is Protein SRL2 (392 aa).

A Phosphoserine modification is found at serine 11. Residues 18 to 52 (KPSETPKMEEEKLEVTNVNASSSKKVHKSKKSTSK) are disordered. Residues 21–31 (ETPKMEEEKLE) are compositionally biased toward basic and acidic residues. The segment covering 41 to 50 (KKVHKSKKST) has biased composition (basic residues). A Phosphoserine modification is found at serine 139. Residues 284 to 303 (EDSTAVTNENGHISSEKNLK) are disordered. Polar residues predominate over residues 287-296 (TAVTNENGHI).

The protein localises to the cytoplasm. It localises to the nucleus. The sequence is that of Protein SRL2 (SRL2) from Saccharomyces cerevisiae (strain ATCC 204508 / S288c) (Baker's yeast).